A 426-amino-acid polypeptide reads, in one-letter code: tRNA(Ile)-lysidine synthase (426 aa).

Residue 27–32 (SGGADS) participates in ATP binding.

This sequence belongs to the tRNA(Ile)-lysidine synthase family.

The protein localises to the cytoplasm. The enzyme catalyses cytidine(34) in tRNA(Ile2) + L-lysine + ATP = lysidine(34) in tRNA(Ile2) + AMP + diphosphate + H(+). Its function is as follows. Ligates lysine onto the cytidine present at position 34 of the AUA codon-specific tRNA(Ile) that contains the anticodon CAU, in an ATP-dependent manner. Cytidine is converted to lysidine, thus changing the amino acid specificity of the tRNA from methionine to isoleucine. The chain is tRNA(Ile)-lysidine synthase from Bacteroides thetaiotaomicron (strain ATCC 29148 / DSM 2079 / JCM 5827 / CCUG 10774 / NCTC 10582 / VPI-5482 / E50).